The following is a 227-amino-acid chain: Cytochrome c oxidase subunit 2 (227 aa).

Residues 1 to 14 (MAHPVQLGLQDATS) lie on the Mitochondrial intermembrane side of the membrane. The helical transmembrane segment at 15–45 (PVMEELITFHDHALMAMSLISLLVLYALFST) threads the bilayer. Residues 46 to 59 (LTTKLTNTNITDAQ) lie on the Mitochondrial matrix side of the membrane. The chain crosses the membrane as a helical span at residues 60 to 87 (EMEIIWTILPAIILVLIALPSLRILYLT). The Mitochondrial intermembrane portion of the chain corresponds to 88-227 (DEVNNPSFTI…IFEMGPVFTL (140 aa)). His161, Cys196, Glu198, Cys200, His204, and Met207 together coordinate Cu cation. Glu198 serves as a coordination point for Mg(2+).

The protein belongs to the cytochrome c oxidase subunit 2 family. As to quaternary structure, component of the cytochrome c oxidase (complex IV, CIV), a multisubunit enzyme composed of 14 subunits. The complex is composed of a catalytic core of 3 subunits MT-CO1, MT-CO2 and MT-CO3, encoded in the mitochondrial DNA, and 11 supernumerary subunits COX4I, COX5A, COX5B, COX6A, COX6B, COX6C, COX7A, COX7B, COX7C, COX8 and NDUFA4, which are encoded in the nuclear genome. The complex exists as a monomer or a dimer and forms supercomplexes (SCs) in the inner mitochondrial membrane with NADH-ubiquinone oxidoreductase (complex I, CI) and ubiquinol-cytochrome c oxidoreductase (cytochrome b-c1 complex, complex III, CIII), resulting in different assemblies (supercomplex SCI(1)III(2)IV(1) and megacomplex MCI(2)III(2)IV(2)). Found in a complex with TMEM177, COA6, COX18, COX20, SCO1 and SCO2. Interacts with TMEM177 in a COX20-dependent manner. Interacts with COX20. Interacts with COX16. Cu cation is required as a cofactor.

The protein localises to the mitochondrion inner membrane. It catalyses the reaction 4 Fe(II)-[cytochrome c] + O2 + 8 H(+)(in) = 4 Fe(III)-[cytochrome c] + 2 H2O + 4 H(+)(out). Component of the cytochrome c oxidase, the last enzyme in the mitochondrial electron transport chain which drives oxidative phosphorylation. The respiratory chain contains 3 multisubunit complexes succinate dehydrogenase (complex II, CII), ubiquinol-cytochrome c oxidoreductase (cytochrome b-c1 complex, complex III, CIII) and cytochrome c oxidase (complex IV, CIV), that cooperate to transfer electrons derived from NADH and succinate to molecular oxygen, creating an electrochemical gradient over the inner membrane that drives transmembrane transport and the ATP synthase. Cytochrome c oxidase is the component of the respiratory chain that catalyzes the reduction of oxygen to water. Electrons originating from reduced cytochrome c in the intermembrane space (IMS) are transferred via the dinuclear copper A center (CU(A)) of subunit 2 and heme A of subunit 1 to the active site in subunit 1, a binuclear center (BNC) formed by heme A3 and copper B (CU(B)). The BNC reduces molecular oxygen to 2 water molecules using 4 electrons from cytochrome c in the IMS and 4 protons from the mitochondrial matrix. This Cercocebus galeritus (Tana river mangabey) protein is Cytochrome c oxidase subunit 2 (MT-CO2).